The sequence spans 128 residues: L-ectoine synthase (128 aa).

It belongs to the ectoine synthase family.

It carries out the reaction (2S)-4-acetamido-2-aminobutanoate = L-ectoine + H2O. Its pathway is amine and polyamine biosynthesis; ectoine biosynthesis; L-ectoine from L-aspartate 4-semialdehyde: step 3/3. Its function is as follows. Catalyzes the circularization of gamma-N-acetyl-alpha,gamma-diaminobutyric acid (ADABA) to ectoine (1,4,5,6-tetrahydro-2-methyl-4-pyrimidine carboxylic acid), which is an excellent osmoprotectant. The polypeptide is L-ectoine synthase (Vibrio campbellii (strain ATCC BAA-1116)).